The sequence spans 148 residues: 15 kDa excretory/secretory protein (148 aa).

The signal sequence occupies residues 1-19 (MFFAFAVLLIALATREAYG).

The protein to T.colubriformis 30 kDa antigenic glycoprotein.

The protein resides in the secreted. The chain is 15 kDa excretory/secretory protein from Haemonchus contortus (Barber pole worm).